Reading from the N-terminus, the 129-residue chain is Small ribosomal subunit protein uS11 (129 aa).

This sequence belongs to the universal ribosomal protein uS11 family. As to quaternary structure, part of the 30S ribosomal subunit. Interacts with proteins S7 and S18. Binds to IF-3.

In terms of biological role, located on the platform of the 30S subunit, it bridges several disparate RNA helices of the 16S rRNA. Forms part of the Shine-Dalgarno cleft in the 70S ribosome. The chain is Small ribosomal subunit protein uS11 from Staphylococcus saprophyticus subsp. saprophyticus (strain ATCC 15305 / DSM 20229 / NCIMB 8711 / NCTC 7292 / S-41).